The sequence spans 858 residues: DNA mismatch repair protein MutS (858 aa).

611-618 is a binding site for ATP; sequence GPNMGGKS.

This sequence belongs to the DNA mismatch repair MutS family.

Functionally, this protein is involved in the repair of mismatches in DNA. It is possible that it carries out the mismatch recognition step. This protein has a weak ATPase activity. The chain is DNA mismatch repair protein MutS from Actinobacillus succinogenes (strain ATCC 55618 / DSM 22257 / CCUG 43843 / 130Z).